A 208-amino-acid chain; its full sequence is Ribosomal RNA small subunit methyltransferase G (208 aa).

S-adenosyl-L-methionine-binding positions include Gly77, Leu82, 128–129 (VE), and Arg142.

It belongs to the methyltransferase superfamily. RNA methyltransferase RsmG family.

The protein resides in the cytoplasm. It carries out the reaction guanosine(527) in 16S rRNA + S-adenosyl-L-methionine = N(7)-methylguanosine(527) in 16S rRNA + S-adenosyl-L-homocysteine. Specifically methylates the N7 position of guanine in position 527 of 16S rRNA. The protein is Ribosomal RNA small subunit methyltransferase G of Chromohalobacter salexigens (strain ATCC BAA-138 / DSM 3043 / CIP 106854 / NCIMB 13768 / 1H11).